The primary structure comprises 750 residues: DDT domain-containing protein DDR4 (750 aa).

Positions 1–125 (MGSSSDIVPD…ITSLVPPPEP (125 aa)) are disordered. The span at 45 to 54 (RAQQRLQELQ) shows a compositional bias: low complexity. A compositionally biased stretch (basic and acidic residues) spans 55 to 77 (AAERKLKPPKKEYKREQHRRREE). Residues 78–100 (VVEEDEDSEDDDQEDEENDGDDE) show a composition bias toward acidic residues. In terms of domain architecture, DDT spans 133–192 (LRSMWELASVLNFLHVFRPLLKINAEFSAEEFETALLTPNDTLSDIHIPLLKAIPPVTRM). Disordered regions lie at residues 450–505 (NGRS…TDFV) and 532–750 (LKKR…TDNS). Positions 451–471 (GRSTSSTHPTEPVNDTASGRS) are enriched in polar residues. Over residues 545-585 (EGDEEKGDEEYKWDEDNAEYEEEEEEEEEEDSLSASEEDSD) the composition is skewed to acidic residues. Residues 595-606 (RRETKLRSRSND) are compositionally biased toward basic and acidic residues. Over residues 688–707 (NADTTNGKENNQLNKSNGTT) the composition is skewed to polar residues. Residues 741-750 (LKDDDKTDNS) show a composition bias toward basic and acidic residues.

As to quaternary structure, interacts (via the DDT domain) with CHR11 (via C-terminus).

The protein resides in the nucleus. Probable transcription regulator. The sequence is that of DDT domain-containing protein DDR4 from Arabidopsis thaliana (Mouse-ear cress).